Consider the following 196-residue polypeptide: Sesquiterpene phosphatase astK (196 aa).

It belongs to the HAD-like hydrolase superfamily.

It carries out the reaction (S,S)-drim-8-en-11-yl phosphate + H2O = (S,S)-drim-8-en-11-ol + phosphate. It participates in secondary metabolite biosynthesis; terpenoid biosynthesis. Its function is as follows. Sesquiterpene phosphatase; part of the gene cluster that mediates the biosynthesis of astellolides, drimane-type sesquiterpene esters that show antimicrobial, anti-inflammatory, and anti-tumor activities. The first step in astellolide biosynthesis is performed by the sesquiterpene cyclase astC that catalyzes the formation of drimanyl pyrophosphate from farnesyl pyrophosphate. Drimanyl pyrophosphate is then dephosphorylated by the sesquiterpene phosphatase astI to produce drimanyl monophosphate which is further dephosphorylated to drim-8-ene-11-ol by atsK. Drim-8-ene-11-ol is converted to confertifolin, probably by the cytochrome P450 monooxygenase astD and/or the dehydrogenase astE. The cytochrome P450 monooxygenases astB, astF and astJ then hydroxylate confertifolin at C6, C14, or C15 to form trihydroxy confertifolin. The nonribosomal peptide synthetase astA catalyzes ester bond formation between trihydroxy contifolin and benzoic acid (BA) or 4-hydroxy benzoic acid (4HBA), leading to the formation of dideacetyl astellolides A and B, respectively. Finally, the O-acetyltransferase astG converts dideacetyl astellolides A and B into deacetyl astellolides A and B. This is Sesquiterpene phosphatase astK from Aspergillus oryzae (strain ATCC 42149 / RIB 40) (Yellow koji mold).